An 84-amino-acid polypeptide reads, in one-letter code: Coiled-coil-helix-coiled-coil-helix domain-containing protein 7 (84 aa).

The CHCH domain maps to 12–54 (SNPCLEETDASTKCMDENQYQKDLCTSYFIKYKNCRKFWNGIM). Short sequence motifs (cx9C motif) lie at residues 15 to 25 (CLEETDASTKC) and 36 to 46 (CTSYFIKYKNC). 2 disulfides stabilise this stretch: Cys15/Cys46 and Cys25/Cys36.

The protein belongs to the CHCHD7 family.

The protein localises to the mitochondrion intermembrane space. The polypeptide is Coiled-coil-helix-coiled-coil-helix domain-containing protein 7 (chchd7) (Xenopus laevis (African clawed frog)).